The primary structure comprises 300 residues: Probable phytol kinase, chloroplastic (300 aa).

The transit peptide at 1 to 36 (MAAARPALPSSPTSLLLARSTSAPDLAARRPRRWLV) directs the protein to the chloroplast. Helical transmembrane passes span 60 to 78 (LLRD…YSLV), 98 to 118 (VVHV…SNST), 122 to 142 (FFAA…GLGF), 168 to 188 (YVIV…IGIV), 227 to 247 (FISG…LGYI), 254 to 274 (ALGK…IPVT), and 276 to 296 (VVDD…LLFG).

This sequence belongs to the polyprenol kinase family.

Its subcellular location is the plastid. It is found in the chloroplast membrane. The enzyme catalyses phytol + CTP = phytyl phosphate + CDP + H(+). It functions in the pathway cofactor biosynthesis; tocopherol biosynthesis. Involved in the activation and reutilization of phytol from chlorophyll degradation in plant metabolism, including tocopherol biosynthesis. Catalyzes the conversion of phytol to phytol monophosphate (PMP). The polypeptide is Probable phytol kinase, chloroplastic (Triticum aestivum (Wheat)).